A 440-amino-acid chain; its full sequence is Protein dumpy-20 (440 aa).

Positions 96-119 (ILSDPSLHGSNSSSSTSDVGSSVD) are disordered. The span at 98 to 119 (SDPSLHGSNSSSSTSDVGSSVD) shows a compositional bias: low complexity. 2 consecutive BED-type zinc fingers follow at residues 137 to 186 (PTEN…YQKV) and 350 to 399 (KTEH…YNDV). Positions 156, 159, 174, 179, 369, 372, 387, and 392 each coordinate Zn(2+).

Functionally, may be directly or indirectly involved in cuticle function. The polypeptide is Protein dumpy-20 (dpy-20) (Caenorhabditis elegans).